The sequence spans 462 residues: L-seryl-tRNA(Sec) selenium transferase (462 aa).

Residue lysine 292 is modified to N6-(pyridoxal phosphate)lysine.

This sequence belongs to the SelA family. It depends on pyridoxal 5'-phosphate as a cofactor.

It is found in the cytoplasm. The enzyme catalyses L-seryl-tRNA(Sec) + selenophosphate + H(+) = L-selenocysteinyl-tRNA(Sec) + phosphate. The protein operates within aminoacyl-tRNA biosynthesis; selenocysteinyl-tRNA(Sec) biosynthesis; selenocysteinyl-tRNA(Sec) from L-seryl-tRNA(Sec) (bacterial route): step 1/1. Its function is as follows. Converts seryl-tRNA(Sec) to selenocysteinyl-tRNA(Sec) required for selenoprotein biosynthesis. The sequence is that of L-seryl-tRNA(Sec) selenium transferase from Clostridium perfringens (strain ATCC 13124 / DSM 756 / JCM 1290 / NCIMB 6125 / NCTC 8237 / Type A).